A 175-amino-acid chain; its full sequence is ATP-dependent protease subunit HslV (175 aa).

Thr2 is an active-site residue. Ala156, Cys159, and Thr162 together coordinate Na(+).

The protein belongs to the peptidase T1B family. HslV subfamily. A double ring-shaped homohexamer of HslV is capped on each side by a ring-shaped HslU homohexamer. The assembly of the HslU/HslV complex is dependent on binding of ATP.

The protein localises to the cytoplasm. The enzyme catalyses ATP-dependent cleavage of peptide bonds with broad specificity.. Allosterically activated by HslU binding. Protease subunit of a proteasome-like degradation complex believed to be a general protein degrading machinery. In Rhizobium etli (strain CIAT 652), this protein is ATP-dependent protease subunit HslV.